We begin with the raw amino-acid sequence, 817 residues long: LisH domain-containing protein ARMC9 (817 aa).

Residues 7–39 (HESELLGLVKEYLDFAEFEDTLKTFSKECKVKG) enclose the LisH domain. Residues 204–230 (GPNSKELLQQLHQQLVEAERRAMTYLK) are a coiled coil. Serine 583 carries the phosphoserine modification. Disordered regions lie at residues 637-659 (RKGPASVQWSGDEPLRRPVTPGG) and 761-817 (CKPQ…SIRK). The segment covering 765–774 (VPSTPETVEQ) has biased composition (polar residues). Residues 793–807 (PQQASRPASTASSTR) are compositionally biased toward low complexity. The span at 808-817 (GLHSSQSIRK) shows a compositional bias: polar residues.

As to quaternary structure, interacts with TOGARAM1, CCDC66, CEP104, CSPP1 and CEP290. Interacts with NDUFAF2.

Its subcellular location is the cytoplasm. It localises to the cytoskeleton. The protein localises to the cilium basal body. It is found in the cell projection. The protein resides in the cilium. Its subcellular location is the microtubule organizing center. It localises to the centrosome. The protein localises to the centriole. Involved in ciliogenesis. It is required for appropriate acetylation and polyglutamylation of ciliary microtubules, and regulation of cilium length. Acts as a positive regulator of hedgehog (Hh) signaling. May participate in the trafficking and/or retention of GLI2 and GLI3 proteins at the ciliary tip. This is LisH domain-containing protein ARMC9 from Mus musculus (Mouse).